The primary structure comprises 735 residues: Stonin-1 (735 aa).

The segment at 1–35 (MCSTNPGKWVTFDDDPAVQSSQKSKNFPLENQGVC) is disordered. Residues 275-408 (GWSFMLRIPE…KLPAVSKPKK (134 aa)) enclose the SHD domain. Residues 412–715 (EQEISLEIVD…ACYNIQVEIE (304 aa)) form the MHD domain.

Belongs to the Stoned B family. In terms of tissue distribution, ubiquitous.

It localises to the cytoplasm. Its subcellular location is the membrane. Functionally, may be involved in the endocytic machinery. This Homo sapiens (Human) protein is Stonin-1 (STON1).